The following is a 117-amino-acid chain: Large ribosomal subunit protein bL20c (117 aa).

The protein belongs to the bacterial ribosomal protein bL20 family.

The protein localises to the plastid. It is found in the chloroplast. Its function is as follows. Binds directly to 23S ribosomal RNA and is necessary for the in vitro assembly process of the 50S ribosomal subunit. It is not involved in the protein synthesizing functions of that subunit. The sequence is that of Large ribosomal subunit protein bL20c from Chloranthus spicatus (Chulantree).